We begin with the raw amino-acid sequence, 542 residues long: CTP synthase (542 aa).

Positions 1–265 (MARYIFITGG…DQEVLAAFGI (265 aa)) are amidoligase domain. CTP is bound at residue Ser-13. Residue Ser-13 participates in UTP binding. 14–19 (SLGKGL) contributes to the ATP binding site. Tyr-54 is a binding site for L-glutamine. Residue Asp-71 participates in ATP binding. 2 residues coordinate Mg(2+): Asp-71 and Glu-139. Residues 146-148 (DIE), 186-191 (KTKPTQ), and Lys-222 each bind CTP. Residues 186 to 191 (KTKPTQ) and Lys-222 each bind UTP. An ATP-binding site is contributed by 238-240 (RDV). In terms of domain architecture, Glutamine amidotransferase type-1 spans 291-541 (TIAIVGKYTG…IAAALEQSRL (251 aa)). Residue Gly-353 participates in L-glutamine binding. Residue Cys-380 is the Nucleophile; for glutamine hydrolysis of the active site. L-glutamine is bound by residues 381–384 (FGMQ), Glu-404, and Arg-469. Catalysis depends on residues His-514 and Glu-516.

The protein belongs to the CTP synthase family. Homotetramer.

The catalysed reaction is UTP + L-glutamine + ATP + H2O = CTP + L-glutamate + ADP + phosphate + 2 H(+). The enzyme catalyses L-glutamine + H2O = L-glutamate + NH4(+). It catalyses the reaction UTP + NH4(+) + ATP = CTP + ADP + phosphate + 2 H(+). Its pathway is pyrimidine metabolism; CTP biosynthesis via de novo pathway; CTP from UDP: step 2/2. Allosterically activated by GTP, when glutamine is the substrate; GTP has no effect on the reaction when ammonia is the substrate. The allosteric effector GTP functions by stabilizing the protein conformation that binds the tetrahedral intermediate(s) formed during glutamine hydrolysis. Inhibited by the product CTP, via allosteric rather than competitive inhibition. Its function is as follows. Catalyzes the ATP-dependent amination of UTP to CTP with either L-glutamine or ammonia as the source of nitrogen. Regulates intracellular CTP levels through interactions with the four ribonucleotide triphosphates. The chain is CTP synthase from Methylocella silvestris (strain DSM 15510 / CIP 108128 / LMG 27833 / NCIMB 13906 / BL2).